Consider the following 320-residue polypeptide: Olfactory receptor 2AT4 (320 aa).

At methionine 1–proline 31 the chain is on the extracellular side. The N-linked (GlcNAc...) asparagine glycan is linked to asparagine 7. The helical transmembrane segment at valine 32–valine 52 threads the bilayer. Residues alanine 53–lysine 62 lie on the Cytoplasmic side of the membrane. A helical membrane pass occupies residues proline 63–valine 83. At proline 84–cysteine 102 the chain is on the extracellular side. Cysteine 102 and cysteine 184 are joined by a disulfide. A helical transmembrane segment spans residues leucine 103–methionine 123. Topologically, residues alanine 124–threonine 145 are cytoplasmic. The helical transmembrane segment at asparagine 146–valine 166 threads the bilayer. At arginine 167 to glutamine 200 the chain is on the extracellular side. The chain crosses the membrane as a helical span at residues threonine 201–leucine 221. The Cytoplasmic portion of the chain corresponds to serine 222–threonine 245. The chain crosses the membrane as a helical span at residues cysteine 246–alanine 266. The Extracellular segment spans residues tyrosine 267–histidine 276. A helical transmembrane segment spans residues isoleucine 277–leucine 297. Topologically, residues arginine 298 to isoleucine 320 are cytoplasmic.

Belongs to the G-protein coupled receptor 1 family. Detected in the keratinocytes of the epidermis (at protein level). Detected in hair follicles in proximal outer root sheath and hair matrix keratinocytes (at protein level).

It is found in the cell membrane. In terms of biological role, olfactory receptor. Activated by the synthetic sandalwood odorant sandalore. Endogenous ligand is unknown. The activity of this receptor is probably mediated by G proteins which induce elevation of intracellular Ca(2+), a cAMP-dependent pathway and phosphorylation of MAPK1/ERK2, MAPK3/ERK1 and p38 MAPKs. Activation of OR2AT4 induces proliferation, migration, and re-epithelialization during wound-healing processes of keratinocytes. Stimulation of OR2AT4 by sandalore promotes hair growth by decreasing apoptosis and increasing production of the anagen-prolonging growth factor IGF1 as well as other pathways involving various kinases. In Homo sapiens (Human), this protein is Olfactory receptor 2AT4.